Reading from the N-terminus, the 367-residue chain is Carbohydrate sulfotransferase 14 (367 aa).

The Cytoplasmic portion of the chain corresponds to 1-34 (MPPRKKEYGIKRASGSLVHFRAPVSATTIRRHSA). The helical; Signal-anchor for type II membrane protein transmembrane segment at 35-55 (VVPSVLTFAVIVASGGLLLMI) threads the bilayer. Residues 56–367 (EKGMLNSVQT…PNTTTEYCRH (312 aa)) are Lumenal-facing. An N-linked (GlcNAc...) asparagine glycan is attached at asparagine 99. Residues 144–150 (PKVACSN) and 202–210 (REPMARLLS) contribute to the 3'-phosphoadenylyl sulfate site. N-linked (GlcNAc...) asparagine glycosylation is present at asparagine 359.

It belongs to the sulfotransferase 2 family.

Its subcellular location is the golgi apparatus membrane. In terms of biological role, catalyzes the transfer of sulfate to position 4 of the N-acetylgalactosamine (GalNAc) residue of dermatan sulfate. The polypeptide is Carbohydrate sulfotransferase 14 (chst14) (Danio rerio (Zebrafish)).